We begin with the raw amino-acid sequence, 102 residues long: U7-agatoxin-Ao1a (102 aa).

Residues 1-19 (MTQAFFFLLLVSLVASTLS) form the signal peptide. A propeptide spanning residues 20–39 (KEFNFCPRAIDEVCPVKEKR) is cleaved from the precursor. Trp101 is subject to Tryptophan amide.

Belongs to the venom protein 11 family. 02 (wap-2) subfamily. Post-translationally, contains 5 disulfide bonds. Expressed by the venom gland.

The protein resides in the secreted. This chain is U7-agatoxin-Ao1a, found in Agelena orientalis (Funnel-web spider).